The following is a 112-amino-acid chain: uncharacterized protein (112 aa).

This is an uncharacterized protein from Archaeoglobus fulgidus (strain ATCC 49558 / DSM 4304 / JCM 9628 / NBRC 100126 / VC-16).